Consider the following 396-residue polypeptide: NADH-quinone oxidoreductase subunit D (396 aa).

This sequence belongs to the complex I 49 kDa subunit family. As to quaternary structure, NDH-1 is composed of 14 different subunits. Subunits NuoB, C, D, E, F, and G constitute the peripheral sector of the complex.

Its subcellular location is the cell inner membrane. The catalysed reaction is a quinone + NADH + 5 H(+)(in) = a quinol + NAD(+) + 4 H(+)(out). NDH-1 shuttles electrons from NADH, via FMN and iron-sulfur (Fe-S) centers, to quinones in the respiratory chain. The immediate electron acceptor for the enzyme in this species is believed to be ubiquinone. Couples the redox reaction to proton translocation (for every two electrons transferred, four hydrogen ions are translocated across the cytoplasmic membrane), and thus conserves the redox energy in a proton gradient. The protein is NADH-quinone oxidoreductase subunit D of Bartonella quintana (strain Toulouse) (Rochalimaea quintana).